Reading from the N-terminus, the 1380-residue chain is Mitogen-activated protein kinase kinase kinase 5 (1380 aa).

Residues 30–97 form a disordered region; that stretch reads CRRGGGAATA…GNSGSGGGRR (68 aa). Low complexity predominate over residues 37 to 49; sequence ATAAEGEPSLQPL. The span at 50 to 59 shows a compositional bias: pro residues; sequence LVPPPPPPPG. Residues Arg85 and Arg87 each carry the asymmetric dimethylarginine modification. Residue Ser90 is modified to Phosphoserine; by PIM1 and PKB/AKT1. Residues 649–1374 are interaction with PPIA/CYPA; it reads HCKRFFEMVN…MLCTLWKAII (726 aa). The region spanning 687-945 is the Protein kinase domain; that stretch reads NGDRVVLGKG…ANDLLIDEFL (259 aa). Residues 693–701 and Lys716 each bind ATP; that span reads LGKGTYGIV. Position 725 is a phosphotyrosine (Tyr725). The active-site Proton acceptor is the Asp810. At Thr820 the chain carries Phosphothreonine; by autocatalysis. Thr845 is modified (phosphothreonine; by autocatalysis, MELK and MAP3K6). The residue at position 849 (Thr849) is a Phosphothreonine; by autocatalysis. The residue at position 965 (Ser965) is a Phosphoserine. Phosphoserine; by autocatalysis is present on Ser973. Phosphoserine occurs at positions 1036 and 1040. Residues 1188 to 1215 are disordered; it reads ASESDTADPEDLDVEDEHEELSSNQTVR. Residues 1192-1206 show a composition bias toward acidic residues; that stretch reads DTADPEDLDVEDEHE. Residues 1252 to 1292 adopt a coiled-coil conformation; that stretch reads LGRMKIETNRLLEELVRKERELQALLHQAIEEKDQEIRHLK.

The protein belongs to the protein kinase superfamily. STE Ser/Thr protein kinase family. MAP kinase kinase kinase subfamily. Homodimer when inactive. Binds both upstream activators and downstream substrates in multimolecular complexes. Part of a cytoplasmic complex made of HIPK1, DAB2IP and MAP3K5 in response to TNF. This complex formation promotes MAP3K5-JNK activation and subsequent apoptosis. Interacts with SOCS1 which recognizes phosphorylation of Tyr-725 and induces MAP3K5/ASK1 degradation in endothelial cells. Interacts with the 14-3-3 family proteins such as YWHAB, YWHAE, YWHAQ, YWHAH, YWHAZ and SFN. Interacts with ARRB2, BIRC2, DAB2IP, IGF1R, MAP3K6/ASK2, PIM1, PGAM5, SOCS1, STUB1, TRAF2 and TXN. Interacts with ERN1 in a TRAF2-dependent manner. Interacts with calcineurin subunit PPP3R1, PPP5C, PPM1L and TRAF6. Interacts (via N-terminus) with RAF1 and this interaction inhibits the proapoptotic function of MAP3K5. Interacts with DAB2IP (via N-terminus C2 domain); the interaction occurs in a TNF-alpha-dependent manner. Interacts with DUSP13A; may positively regulate apoptosis. Interacts with PPIA/CYPA. Interacts with PRMT1; the interaction results in MAP3K5 methylation by PRMT1 which inhibits MAP3K5 activation. Interacts with TRAF2; the interaction is inhibited by PRMT1. Interacts with TRIM48. It depends on Mg(2+) as a cofactor. Ser-90 and Ser-1040 are inactivating phosphorylation sites, the former of which is phosphorylated by AKT1. Phosphorylated at Ser-973 which induces association of MAP3K5/ASK1 with the 14-3-3 family proteins and suppresses MAP3K5/ASK1 activity. Calcineurin (CN) dephosphorylates this site. Also dephosphorylated and activated by PGAM5. Phosphorylated at Thr-845 through autophosphorylation and by MAP3K6/ASK2 which leads to activation. Thr-845 is dephosphorylated by PPP5C. Phosphorylation at Ser-973 in response to oxidative stress is negatively regulated by PPIA/CYPA. In terms of processing, ubiquitinated. Tumor necrosis factor (TNF) induces TNFR2-dependent ubiquitination, leading to proteasomal degradation. Ubiquitinated by RC3H2 in a TRIM48-dependent manner. Post-translationally, methylation at Arg-85 and Arg-87 by PRMT1 promotes association of MAP3K5 with thioredoxin and negatively regulates MAP3K5 association with TRAF2, inhibiting MAP3K5 activation. Methylation is blocked by ubiquitination of PRMT1 by TRIM48. As to expression, expressed in various adult mouse tissues including heart, brain, lung, liver and kidney.

The protein localises to the cytoplasm. It is found in the endoplasmic reticulum. The catalysed reaction is L-seryl-[protein] + ATP = O-phospho-L-seryl-[protein] + ADP + H(+). The enzyme catalyses L-threonyl-[protein] + ATP = O-phospho-L-threonyl-[protein] + ADP + H(+). Activated by various stressors, including oxidative stress, endoplasmic reticulum stress, and calcium overload, as well as by receptor-mediated inflammatory signals, such as the tumor necrosis factor (TNF) and lipopolysaccharide (LPS). Homophilic association of MAP3K5/ASK1 through the C-terminal coiled-coil domains and the heteromeric complex formation of MAP3K5/ASK1 with the reduced form of thioredoxin (TXN), constitutes an inactive form of the kinase. Upon ROS-induced dissociation of TXN from MAP3K5/ASK1, TRAF2 and TRAF6 are reciprocally recruited to MAP3K5/ASK1 and form the active MAP3K5/ASK1 signalosome, in which TRAF2 and TRAF6 appear to facilitate the active configuration of MAP3K5/ASK1. MAP3K5/ASK1 activity is also regulated through several phosphorylation and dephosphorylation events. Thr-845 is an activating phosphorylation site that is autophosphorylated and phosphorylated by MAP3K6/ASK2 and dephosphorylated by PPP5C. Ser-90 and Ser-1040 are inactivating phosphorylation sites, the former of which is phosphorylated by AKT1. Phosphorylation of Ser-973 induces association of MAP3K5/ASK1 with the 14-3-3 family proteins, which suppresses MAP3K5/ASK1 activity. Calcium/calmodulin-activated protein phosphatase calcineurin (PPP3CA) has been shown to directly dephosphorylate this site. SOCS1 binds to ASK1 by recognizing phosphorylation of Tyr-725 and induces MAP3K5/ASK1 degradation in endothelial cells. Also dephosphorylated and activated by PGAM5. Contains an N-terminal autoinhibitory domain. Its function is as follows. Serine/threonine kinase which acts as an essential component of the MAP kinase signal transduction pathway. Plays an important role in the cascades of cellular responses evoked by changes in the environment. Mediates signaling for determination of cell fate such as differentiation and survival. Plays a crucial role in the apoptosis signal transduction pathway through mitochondria-dependent caspase activation. MAP3K5/ASK1 is required for the innate immune response, which is essential for host defense against a wide range of pathogens. Mediates signal transduction of various stressors like oxidative stress as well as by receptor-mediated inflammatory signals, such as the tumor necrosis factor (TNF) or lipopolysaccharide (LPS). Once activated, acts as an upstream activator of the MKK/JNK signal transduction cascade and the p38 MAPK signal transduction cascade through the phosphorylation and activation of several MAP kinase kinases like MAP2K4/SEK1, MAP2K3/MKK3, MAP2K6/MKK6 and MAP2K7/MKK7. These MAP2Ks in turn activate p38 MAPKs and c-jun N-terminal kinases (JNKs). Both p38 MAPK and JNKs control the transcription factors activator protein-1 (AP-1). The polypeptide is Mitogen-activated protein kinase kinase kinase 5 (Map3k5) (Mus musculus (Mouse)).